The following is a 957-amino-acid chain: Glycine dehydrogenase (decarboxylating) (957 aa).

The residue at position 708 (lysine 708) is an N6-(pyridoxal phosphate)lysine.

It belongs to the GcvP family. In terms of assembly, the glycine cleavage system is composed of four proteins: P, T, L and H. Pyridoxal 5'-phosphate serves as cofactor.

The enzyme catalyses N(6)-[(R)-lipoyl]-L-lysyl-[glycine-cleavage complex H protein] + glycine + H(+) = N(6)-[(R)-S(8)-aminomethyldihydrolipoyl]-L-lysyl-[glycine-cleavage complex H protein] + CO2. Its function is as follows. The glycine cleavage system catalyzes the degradation of glycine. The P protein binds the alpha-amino group of glycine through its pyridoxal phosphate cofactor; CO(2) is released and the remaining methylamine moiety is then transferred to the lipoamide cofactor of the H protein. This Escherichia coli O6:H1 (strain CFT073 / ATCC 700928 / UPEC) protein is Glycine dehydrogenase (decarboxylating).